The primary structure comprises 1553 residues: Sodium channel protein PaFPC1 (1553 aa).

The segment at 1–68 is disordered; sequence MADNSPLIRE…SAHPDQALEQ (68 aa). The Cytoplasmic segment spans residues 1 to 140; it reads MADNSPLIRE…RVAISTMVQP (140 aa). Positions 34–60 are enriched in basic and acidic residues; sequence ENGKTEENKDNSRDKGRGANKDRDGSA. A helical transmembrane segment spans residues 141–159; the sequence is IFSYFIMITILIHCIFMIM. Residues 160–165 lie on the Extracellular side of the membrane; sequence PATQTT. A helical transmembrane segment spans residues 166–186; it reads YILELVFLSIYTIEVVVKVLA. At 187–200 the chain is on the cytoplasmic side; sequence RGFILHPFAYLRDP. A helical transmembrane segment spans residues 201–218; the sequence is WNWLDFLVTLIGYITLVV. At 219–224 the chain is on the extracellular side; sequence DLGHLY. The helical transmembrane segment at 225 to 241 threads the bilayer; the sequence is ALRAFRVLRSWRTVTIV. Residues 242-260 lie on the Cytoplasmic side of the membrane; it reads PGWRTIVDALSLSITSLKD. A helical membrane pass occupies residues 261-280; that stretch reads LVLLLLFSLFVFAVLGLQIY. Over 281–360 the chain is Extracellular; the sequence is MGVLTQKCVK…PNYGYTSFDT (80 aa). Disulfide bonds link C288–C337 and C328–C343. N-linked (GlcNAc...) asparagine glycans are attached at residues N300, N308, N312, and N330. Residues 361 to 385 constitute an intramembrane region (pore-forming); it reads FGWAFLSVFRLVTLDYWEDLYQLAL. E378 serves as a coordination point for saxitoxin. Residues 386–392 are Extracellular-facing; the sequence is RSAGPWH. The chain crosses the membrane as a helical span at residues 393–413; that stretch reads ILFFIIVVFYGTFCFLNFILA. At 414-519 the chain is on the cytoplasmic side; the sequence is VVVMSYTHMV…GAIGAVVLSP (106 aa). The helical transmembrane segment at 520–538 threads the bilayer; it reads FFELFIAVIIVLNITFMAL. Over 539-549 the chain is Extracellular; that stretch reads DHHDMNIEFER. Residues 550–569 traverse the membrane as a helical segment; that stretch reads ILRTGNYIFTSIYIVEAVLK. At 570–583 the chain is on the cytoplasmic side; sequence IIALSPKFYFKDSW. Residues 584–603 traverse the membrane as a helical segment; that stretch reads NVFDFIIVVFAILELGLEGV. Residues 604–605 lie on the Extracellular side of the membrane; it reads QG. The helical transmembrane segment at 606 to 623 threads the bilayer; that stretch reads LSVFRSFRLLRVFRLAKF. The Cytoplasmic portion of the chain corresponds to 624–639; the sequence is WPTLNNFMSVMTKSYG. Residues 640-658 traverse the membrane as a helical segment; the sequence is AFVNVMYVMFLLLFIFAII. Over 659 to 686 the chain is Extracellular; sequence GMQLFGMNYIDNMERFPDGDLPRWNFTD. Residue N683 is glycosylated (N-linked (GlcNAc...) asparagine). Residues 687-707 constitute an intramembrane region (pore-forming); it reads FLHSFMIVFRALCGEWIESMW. E701 and E704 together coordinate tetrodotoxin. Position 704 (E704) interacts with saxitoxin. The Extracellular portion of the chain corresponds to 708-719; sequence DCMLVGDWSCIP. C709 and C717 are joined by a disulfide. Residues 720-740 form a helical membrane-spanning segment; the sequence is FFVAVFFVGNLVILNLLIALL. The Cytoplasmic portion of the chain corresponds to 741–857; the sequence is LNNYGSFCTS…VCFLLAKNKY (117 aa). A helical membrane pass occupies residues 858–875; sequence FQKFVTAVLVITSVLLAL. Over 876–888 the chain is Extracellular; sequence EDIYLPQRPVLVN. The chain crosses the membrane as a helical span at residues 889–907; sequence ITLYVDYVLTAFFVIEMII. Over 908 to 921 the chain is Cytoplasmic; that stretch reads MLFAVGFKKYFTSK. A helical transmembrane segment spans residues 922–940; it reads WYWLDFIVVVAYLLNFVLM. The Extracellular portion of the chain corresponds to 941-945; the sequence is CAGIE. A helical membrane pass occupies residues 946-964; sequence ALQTLRLLRVFRLFRPLSK. At 965–981 the chain is on the cytoplasmic side; sequence VNGMQVVTSTLVEAVPH. A helical membrane pass occupies residues 982-1001; that stretch reads IFNVILVGIFFWLVFAIMGV. The Extracellular segment spans residues 1002–1047; it reads QLFAGKFYKCVDENSTVLSHEITMDRNDCLHENYTWENSPMNFDHV. C1011 and C1030 are joined by a disulfide. N1015 carries an N-linked (GlcNAc...) asparagine glycan. N1028 carries an N-linked (GlcNAc...) asparagine; atypical glycan. N1034 carries an N-linked (GlcNAc...) asparagine glycan. Positions 1048 to 1069 form an intramembrane region, pore-forming; sequence GNAYLSLLQVATFKGWLQIMND. A tetrodotoxin-binding site is contributed by G1062. W1063 is a binding site for saxitoxin. Residues 1070 to 1086 are Extracellular-facing; that stretch reads AIDSREVHKQPIRETNI. A helical transmembrane segment spans residues 1087–1108; sequence YMYLYFIFFIVFGSFFILKLFV. The Cytoplasmic portion of the chain corresponds to 1109 to 1171; the sequence is CILIDIFRQQ…LMYDISVNRK (63 aa). The segment at 1133–1146 is linker region that may regulate channel inactivation; it reads QLIYRRAVMRTMSA. The helical transmembrane segment at 1172–1189 threads the bilayer; the sequence is FEYTMMILIILNVAVMAI. The Extracellular segment spans residues 1190-1200; sequence DHYGQSMEFSE. The chain crosses the membrane as a helical span at residues 1201-1219; the sequence is VLDYLNLIFIIIFFVECVI. The Cytoplasmic portion of the chain corresponds to 1220 to 1231; sequence KVSGLRHHYFKD. Residues 1232–1249 traverse the membrane as a helical segment; sequence PWNIIDFLYVVLAIAGLM. Residues 1250–1262 lie on the Extracellular side of the membrane; it reads LSDVIEKYFISPT. Residues 1263–1279 form a helical membrane-spanning segment; the sequence is LLRILRILRVGRLLRYF. At 1280–1298 the chain is on the cytoplasmic side; the sequence is QSARGMRLLLLALRKALRT. The helical transmembrane segment at 1299 to 1316 threads the bilayer; the sequence is LFNVSFLLFVIMFVYAVF. Over 1317-1338 the chain is Extracellular; that stretch reads GMEFFMHIRDAGAIDDVYNFKT. The segment at residues 1339–1361 is an intramembrane region (pore-forming); that stretch reads FGQSIILLFQLATSAGWDGVYFA. Positions 1354 and 1356 each coordinate tetrodotoxin. D1356 contributes to the saxitoxin binding site. Residues 1362 to 1387 are Extracellular-facing; sequence IANEEDCRAPDHELGYPGNCGSRALG. A disulfide bridge links C1368 with C1381. The helical transmembrane segment at 1388 to 1410 threads the bilayer; sequence IAYLVSYLIITCLVVINMYAAVI. Over 1411–1553 the chain is Cytoplasmic; it reads LDYVLEVYED…NAWRKHKQQN (143 aa).

It belongs to the sodium channel (TC 1.A.1.10) family. Detected in adult nerve cord, muscle, gut and mushroom-shaped accessory glands.

It localises to the cell membrane. Its activity is regulated as follows. Inhibited by the pore blockers saxitoxin and tetrodotoxin. Mediates the voltage-dependent sodium ion permeability of excitable membranes. The sequence is that of Sodium channel protein PaFPC1 from Periplaneta americana (American cockroach).